A 456-amino-acid polypeptide reads, in one-letter code: Gamma-glutamyl phosphate reductase (456 aa).

Belongs to the gamma-glutamyl phosphate reductase family.

The protein localises to the cytoplasm. It carries out the reaction L-glutamate 5-semialdehyde + phosphate + NADP(+) = L-glutamyl 5-phosphate + NADPH + H(+). The protein operates within amino-acid biosynthesis; L-proline biosynthesis; L-glutamate 5-semialdehyde from L-glutamate: step 2/2. In terms of biological role, catalyzes the NADPH-dependent reduction of L-glutamate 5-phosphate into L-glutamate 5-semialdehyde and phosphate. The product spontaneously undergoes cyclization to form 1-pyrroline-5-carboxylate. This Haloquadratum walsbyi (strain DSM 16790 / HBSQ001) protein is Gamma-glutamyl phosphate reductase.